The chain runs to 326 residues: Vitamin B12 import system permease protein BtuC (326 aa).

The next 9 membrane-spanning stretches (helical) occupy residues 15-35 (WLLC…CAGE), 61-81 (LAVL…QALF), 88-108 (PGLL…VLLG), 112-132 (LPNW…TLIL), 146-166 (LLAG…AIYF), 184-204 (GGVD…LLWI), 240-260 (GWMV…GLVI), 274-294 (VLLP…DVVA), and 302-322 (ELPI…WLLL).

The protein belongs to the binding-protein-dependent transport system permease family. FecCD subfamily. The complex is composed of two ATP-binding proteins (BtuD), two transmembrane proteins (BtuC) and a solute-binding protein (BtuF).

The protein localises to the cell inner membrane. Its function is as follows. Part of the ABC transporter complex BtuCDF involved in vitamin B12 import. Involved in the translocation of the substrate across the membrane. This Escherichia coli O17:K52:H18 (strain UMN026 / ExPEC) protein is Vitamin B12 import system permease protein BtuC.